Reading from the N-terminus, the 314-residue chain is Ribonuclease Z (314 aa).

7 residues coordinate Zn(2+): His62, His64, Asp66, His67, His139, Asp210, and His268. Residue Asp66 is the Proton acceptor of the active site.

The protein belongs to the RNase Z family. Homodimer. Requires Zn(2+) as cofactor.

It carries out the reaction Endonucleolytic cleavage of RNA, removing extra 3' nucleotides from tRNA precursor, generating 3' termini of tRNAs. A 3'-hydroxy group is left at the tRNA terminus and a 5'-phosphoryl group is left at the trailer molecule.. Zinc phosphodiesterase, which displays some tRNA 3'-processing endonuclease activity. Probably involved in tRNA maturation, by removing a 3'-trailer from precursor tRNA. The polypeptide is Ribonuclease Z (Acaryochloris marina (strain MBIC 11017)).